A 347-amino-acid chain; its full sequence is Gamma-glutamyl hydrolase B (347 aa).

Positions 1–22 (MIKLFSLFIYLYLISNLKLINT) are cleaved as a signal peptide. Residues 23–314 (INNTPVIGIL…THVEQIYIFN (292 aa)) form the Gamma-glutamyl hydrolase domain. Cys-128 acts as the Nucleophile in catalysis. N-linked (GlcNAc...) asparagine glycans are attached at residues Asn-152, Asn-158, and Asn-201. His-240 functions as the Proton donor in the catalytic mechanism. 3 N-linked (GlcNAc...) asparagine glycosylation sites follow: Asn-273, Asn-314, and Asn-318.

The protein belongs to the peptidase C26 family.

Its subcellular location is the secreted. It localises to the extracellular space. The enzyme catalyses (6S)-5,6,7,8-tetrahydrofolyl-(gamma-L-Glu)(n) + (n-1) H2O = (6S)-5,6,7,8-tetrahydrofolate + (n-1) L-glutamate. In Dictyostelium discoideum (Social amoeba), this protein is Gamma-glutamyl hydrolase B (gghB).